The sequence spans 765 residues: DNA topoisomerase 1 (765 aa).

Residues 1–23 (MSGDHLHNDSQIEADFRLNDSHK) are compositionally biased toward basic and acidic residues. The interval 1-199 (MSGDHLHNDS…NKKKKPKKEE (199 aa)) is disordered. At serine 2 the chain carries N-acetylserine. Serine 2 and serine 10 each carry phosphoserine. Basic residues predominate over residues 24 to 39 (HKDKHKDREHRHKEHK). Residues 40–108 (KEKDREKSKH…DAKIKKEKEN (69 aa)) show a composition bias toward basic and acidic residues. Serine 57 carries the post-translational modification Phosphoserine. Lysine 101 is covalently cross-linked (Glycyl lysine isopeptide (Lys-Gly) (interchain with G-Cter in SUMO2)). A Glycyl lysine isopeptide (Lys-Gly) (interchain with G-Cter in SUMO); alternate cross-link involves residue lysine 103. Lysine 103 is covalently cross-linked (Glycyl lysine isopeptide (Lys-Gly) (interchain with G-Cter in SUMO2); alternate). Serine 112 carries the post-translational modification Phosphoserine. Lysine 117 is covalently cross-linked (Glycyl lysine isopeptide (Lys-Gly) (interchain with G-Cter in SUMO); alternate). Lysine 117 is covalently cross-linked (Glycyl lysine isopeptide (Lys-Gly) (interchain with G-Cter in SUMO2); alternate). A Glycyl lysine isopeptide (Lys-Gly) (interchain with G-Cter in SUMO1); alternate cross-link involves residue lysine 117. The span at 129–166 (PKEDIKPLKRPRDEDDADYKPKKIKTEDTKKEKKRKLE) shows a compositional bias: basic and acidic residues. Residues lysine 134 and lysine 148 each participate in a glycyl lysine isopeptide (Lys-Gly) (interchain with G-Cter in SUMO2) cross-link. Residue lysine 153 forms a Glycyl lysine isopeptide (Lys-Gly) (interchain with G-Cter in SUMO); alternate linkage. Lysine 153 participates in a covalent cross-link: Glycyl lysine isopeptide (Lys-Gly) (interchain with G-Cter in SUMO2); alternate. Residues lysine 158 and lysine 164 each participate in a glycyl lysine isopeptide (Lys-Gly) (interchain with G-Cter in SUMO2) cross-link. Lysine 172 participates in a covalent cross-link: Glycyl lysine isopeptide (Lys-Gly) (interchain with G-Cter in SUMO2); alternate. The residue at position 172 (lysine 172) is an N6-acetyllysine; alternate. A compositionally biased stretch (basic and acidic residues) spans 179 to 199 (KDKDKKVPEPDNKKKKPKKEE). Residue lysine 204 forms a Glycyl lysine isopeptide (Lys-Gly) (interchain with G-Cter in SUMO2) linkage. Lysine 280 carries the post-translational modification N6-acetyllysine. A Glycyl lysine isopeptide (Lys-Gly) (interchain with G-Cter in SUMO2) cross-link involves residue lysine 336. 2 interaction with DNA regions span residues 425–426 (KY) and 488–493 (RAGNEK). One can recognise a Topo IB-type catalytic domain in the interval 432-765 (SSRIKGEKDW…IDMADEDYEF (334 aa)). Serine 506 is modified (phosphoserine; by CK2). Residue lysine 549 forms a Glycyl lysine isopeptide (Lys-Gly) (interchain with G-Cter in SUMO2) linkage. Residues 585 to 587 (TAK) form an interaction with DNA region. Residues lysine 642, lysine 700, and lysine 712 each participate in a glycyl lysine isopeptide (Lys-Gly) (interchain with G-Cter in SUMO2) cross-link. Residue tyrosine 723 is the O-(3'-phospho-DNA)-tyrosine intermediate of the active site.

The protein belongs to the type IB topoisomerase family. In terms of assembly, monomer. Interacts with ERCC6. Interacts with TPRN; TPRN interacts with a number of DNA damage response proteins, is recruited to sites of DNA damage and may play a role in DNA damage repair. As to quaternary structure, (Microbial infection) Interacts with SV40 Large T antigen; this interactions allows viral DNA replication. In terms of processing, sumoylated. Lys-117 is the main site of sumoylation. Sumoylation plays a role in partitioning TOP1 between nucleoli and nucleoplasm. Levels are dramatically increased on camptothecin (CPT) treatment. Post-translationally, phosphorylation at Ser-506 by CK2 increases binding to supercoiled DNA and sensitivity to camptothecin. Endothelial cells.

It localises to the nucleus. Its subcellular location is the nucleolus. It is found in the nucleoplasm. It catalyses the reaction ATP-independent breakage of single-stranded DNA, followed by passage and rejoining.. With respect to regulation, specifically inhibited by camptothecin (CPT), a plant alkaloid with antitumor activity. Functionally, releases the supercoiling and torsional tension of DNA introduced during the DNA replication and transcription by transiently cleaving and rejoining one strand of the DNA duplex. Introduces a single-strand break via transesterification at a target site in duplex DNA. The scissile phosphodiester is attacked by the catalytic tyrosine of the enzyme, resulting in the formation of a DNA-(3'-phosphotyrosyl)-enzyme intermediate and the expulsion of a 5'-OH DNA strand. The free DNA strand then rotates around the intact phosphodiester bond on the opposing strand, thus removing DNA supercoils. Finally, in the religation step, the DNA 5'-OH attacks the covalent intermediate to expel the active-site tyrosine and restore the DNA phosphodiester backbone. Regulates the alternative splicing of tissue factor (F3) pre-mRNA in endothelial cells. Involved in the circadian transcription of the core circadian clock component BMAL1 by altering the chromatin structure around the ROR response elements (ROREs) on the BMAL1 promoter. This Homo sapiens (Human) protein is DNA topoisomerase 1 (TOP1).